The primary structure comprises 229 residues: uncharacterized protein (229 aa).

This is an uncharacterized protein from Sulfolobus islandicus filamentous virus (isolate Iceland/Hveragerdi) (SIFV).